Here is a 234-residue protein sequence, read N- to C-terminus: NAD-dependent protein deacylase (234 aa).

A Deacetylase sirtuin-type domain is found at 1–234 (MKNLVILSGA…IEMASQEMLK (234 aa)). An NAD(+)-binding site is contributed by 9 to 28 (GAGISAESGIKTFRDAGGLW). Residues Tyr-53 and Arg-56 each contribute to the substrate site. An NAD(+)-binding site is contributed by 86-89 (QNVD). The active-site Proton acceptor is the His-104. NAD(+) is bound by residues 169–171 (GTS) and Met-217.

The protein belongs to the sirtuin family. Class III subfamily.

The protein localises to the cytoplasm. The enzyme catalyses N(6)-acetyl-L-lysyl-[protein] + NAD(+) + H2O = 2''-O-acetyl-ADP-D-ribose + nicotinamide + L-lysyl-[protein]. It catalyses the reaction N(6)-succinyl-L-lysyl-[protein] + NAD(+) + H2O = 2''-O-succinyl-ADP-D-ribose + nicotinamide + L-lysyl-[protein]. Its function is as follows. NAD-dependent lysine deacetylase and desuccinylase that specifically removes acetyl and succinyl groups on target proteins. Modulates the activities of several proteins which are inactive in their acylated form. The sequence is that of NAD-dependent protein deacylase from Helicobacter pylori (strain J99 / ATCC 700824) (Campylobacter pylori J99).